Here is a 190-residue protein sequence, read N- to C-terminus: Peptidyl-prolyl cis-trans isomerase FKBP20-1 (190 aa).

Position 2 is an N-acetylglycine (glycine 2). A PPIase FKBP-type domain is found at 32–121; sequence LPVVDVHYEG…IFEVELVACR (90 aa). Residues 149 to 163 are compositionally biased toward basic and acidic residues; that stretch reads AAAKEDDKKKREEAK. A disordered region spans residues 149–190; that stretch reads AAAKEDDKKKREEAKAAAAARIQAKLDAKKGPGKGKGKGKAK. Basic residues predominate over residues 179–190; sequence GPGKGKGKGKAK.

The protein belongs to the FKBP-type PPIase family.

It catalyses the reaction [protein]-peptidylproline (omega=180) = [protein]-peptidylproline (omega=0). Its function is as follows. PPIases accelerate the folding of proteins. It catalyzes the cis-trans isomerization of proline imidic peptide bonds in oligopeptides. The sequence is that of Peptidyl-prolyl cis-trans isomerase FKBP20-1 (FKBP20-1) from Arabidopsis thaliana (Mouse-ear cress).